A 335-amino-acid polypeptide reads, in one-letter code: Glycerol-3-phosphate dehydrogenase [NAD(P)+] (335 aa).

3 residues coordinate NADPH: Phe11, Arg31, and Lys107. 2 residues coordinate sn-glycerol 3-phosphate: Lys107 and Gly135. Ala139 is an NADPH binding site. Lys190, Asp245, Ser255, Arg256, and Asn257 together coordinate sn-glycerol 3-phosphate. Lys190 acts as the Proton acceptor in catalysis. Arg256 lines the NADPH pocket. Residues Leu280 and Glu282 each coordinate NADPH.

Belongs to the NAD-dependent glycerol-3-phosphate dehydrogenase family.

Its subcellular location is the cytoplasm. The enzyme catalyses sn-glycerol 3-phosphate + NAD(+) = dihydroxyacetone phosphate + NADH + H(+). It catalyses the reaction sn-glycerol 3-phosphate + NADP(+) = dihydroxyacetone phosphate + NADPH + H(+). Its pathway is membrane lipid metabolism; glycerophospholipid metabolism. Its function is as follows. Catalyzes the reduction of the glycolytic intermediate dihydroxyacetone phosphate (DHAP) to sn-glycerol 3-phosphate (G3P), the key precursor for phospholipid synthesis. This chain is Glycerol-3-phosphate dehydrogenase [NAD(P)+], found in Anaplasma marginale (strain St. Maries).